A 256-amino-acid chain; its full sequence is Na(+)-translocating NADH-quinone reductase subunit E (256 aa).

Transmembrane regions (helical) follow at residues 1-21, 50-70, 83-103, 123-143, 149-169, and 189-209; these read MWLGAYTWLNVFGILLQAAFI, MSVALVLTVTGSINWFVHAFI, LASVNLGFLELIIFIVVIAAF, GIFLPLIAVNCAILGGVLFGI, FIPMMIFSLGAGCGWWLAIVI, and MGISFITTGLIAMAFMSLTGI. Residues 229–249 show a composition bias toward polar residues; that stretch reads ENTTNPLKESSSKHQPSISKA. The segment at 229–256 is disordered; that stretch reads ENTTNPLKESSSKHQPSISKARTQRRSL.

Belongs to the NqrDE/RnfAE family. In terms of assembly, composed of six subunits; NqrA, NqrB, NqrC, NqrD, NqrE and NqrF.

The protein resides in the cell inner membrane. The catalysed reaction is a ubiquinone + n Na(+)(in) + NADH + H(+) = a ubiquinol + n Na(+)(out) + NAD(+). In terms of biological role, NQR complex catalyzes the reduction of ubiquinone-1 to ubiquinol by two successive reactions, coupled with the transport of Na(+) ions from the cytoplasm to the periplasm. NqrA to NqrE are probably involved in the second step, the conversion of ubisemiquinone to ubiquinol. The polypeptide is Na(+)-translocating NADH-quinone reductase subunit E (Chlamydia pneumoniae (Chlamydophila pneumoniae)).